A 440-amino-acid polypeptide reads, in one-letter code: Beta-1,3-galactosyl-O-glycosyl-glycoprotein beta-1,6-N-acetylglucosaminyltransferase 3 (440 aa).

Residues 1 to 12 (MKMTGWKKKLCR) lie on the Cytoplasmic side of the membrane. A helical; Signal-anchor for type II membrane protein transmembrane segment spans residues 13–30 (GHHLWALGCYMLLAVVAL). Over 31-440 (RLSLRLKCDV…RHKAIYGTEL (410 aa)) the chain is Lumenal. 4 cysteine pairs are disulfide-bonded: cysteine 73/cysteine 230, cysteine 164/cysteine 384, cysteine 185/cysteine 212, and cysteine 393/cysteine 425. Asparagine 108 is a glycosylation site (N-linked (GlcNAc...) asparagine).

It belongs to the glycosyltransferase 14 family. Post-translationally, N-glycosylated.

It is found in the golgi apparatus membrane. The catalysed reaction is a 3-O-[beta-D-galactosyl-(1-&gt;3)-N-acetyl-alpha-D-galactosaminyl]-L-seryl-[protein] + UDP-N-acetyl-alpha-D-glucosamine = 3-O-{beta-D-galactosyl-(1-&gt;3)-[N-acetyl-beta-D-glucosaminyl-(1-&gt;6)]-N-acetyl-alpha-D-galactosaminyl}-L-seryl-[protein] + UDP + H(+). It catalyses the reaction a 3-O-[beta-D-galactosyl-(1-&gt;3)-N-acetyl-alpha-D-galactosaminyl]-L-threonyl-[protein] + UDP-N-acetyl-alpha-D-glucosamine = a 3-O-{beta-D-galactosyl-(1-&gt;3)-[N-acetyl-beta-D-glucosaminyl-(1-&gt;6)]-N-acetyl-alpha-D-galactosaminyl}-L-threonyl-[protein] + UDP + H(+). The enzyme catalyses a beta-D-Gal-(1-&gt;4)-beta-D-GlcNAc-(1-&gt;3)-beta-D-Gal-(1-&gt;4)-beta-D-GlcNAc derivative + UDP-N-acetyl-alpha-D-glucosamine = a beta-D-Gal-(1-&gt;4)-beta-D-GlcNAc-(1-&gt;3)-[beta-D-GlcNAc-(1-&gt;6)]-beta-D-Gal-(1-&gt;4)-N-acetyl-beta-D-glucosaminyl derivative + UDP + H(+). It carries out the reaction 3-O-[N-acetyl-beta-D-glucosaminyl-(1-&gt;3)-N-acetyl-alpha-D-galactosaminyl]-L-seryl-[protein] + UDP-N-acetyl-alpha-D-glucosamine = 3-O-[N-acetyl-beta-D-glucosaminyl-(1-&gt;3)-[N-acetyl-beta-D-glucosaminyl-(1-&gt;6)]-N-acetyl-alpha-D-galactosaminyl]-L-seryl-[protein] + UDP + H(+). The catalysed reaction is a 3-O-[N-acetyl-beta-D-glucosaminyl-(1-&gt;3)-N-acetyl-alpha-D-galactosaminyl]-L-threonyl-[protein] + UDP-N-acetyl-alpha-D-glucosamine = 3-O-[N-acetyl-beta-D-glucosaminyl-(1-&gt;3)-[N-acetyl-beta-D-glucosaminyl-(1-&gt;6)]-N-acetyl-alpha-D-galactosaminyl]-L-threonyl-[protein] + UDP + H(+). It functions in the pathway protein modification; protein glycosylation. In terms of biological role, glycosyltransferase that can synthesize all known mucin beta 6 N-acetylglucosaminides. Mediates core 2 and core 4 O-glycan branching, 2 important steps in mucin-type biosynthesis. Also has I-branching enzyme activity by converting linear into branched poly-N-acetyllactosaminoglycans, leading to introduce the blood group I antigen during embryonic development. The polypeptide is Beta-1,3-galactosyl-O-glycosyl-glycoprotein beta-1,6-N-acetylglucosaminyltransferase 3 (GCNT3) (Ovis aries (Sheep)).